A 171-amino-acid polypeptide reads, in one-letter code: NADH-ubiquinone oxidoreductase chain 6 (171 aa).

Transmembrane regions (helical) follow at residues Met1 to Lys21, Ile25 to Gly44, Phe49 to Ala71, Val85 to Met105, and Trp150 to Ile170.

Belongs to the complex I subunit 6 family. In terms of assembly, core subunit of respiratory chain NADH dehydrogenase (Complex I) which is composed of 45 different subunits.

The protein resides in the mitochondrion inner membrane. The enzyme catalyses a ubiquinone + NADH + 5 H(+)(in) = a ubiquinol + NAD(+) + 4 H(+)(out). Its function is as follows. Core subunit of the mitochondrial membrane respiratory chain NADH dehydrogenase (Complex I) which catalyzes electron transfer from NADH through the respiratory chain, using ubiquinone as an electron acceptor. Essential for the catalytic activity and assembly of complex I. This is NADH-ubiquinone oxidoreductase chain 6 (MT-ND6) from Lemur catta (Ring-tailed lemur).